The chain runs to 260 residues: NAD-capped RNA hydrolase NudC (260 aa).

Residues K25 and R69 each contribute to the substrate site. Zn(2+)-binding residues include C98 and C101. E111 serves as a coordination point for substrate. Zn(2+) contacts are provided by C116 and C119. Residue Y124 participates in substrate binding. Positions 125 to 248 (PQIAPCVIVA…TVARRLIEDT (124 aa)) constitute a Nudix hydrolase domain. Residues A158, E174, and E178 each coordinate a divalent metal cation. Positions 159 to 180 (GFVEVGETLEQAVSREVLEESN) match the Nudix box motif. Position 192–199 (192–199 (QPWPFPHS)) interacts with substrate. E219 is an a divalent metal cation binding site. A241 contacts substrate.

Belongs to the Nudix hydrolase family. NudC subfamily. As to quaternary structure, homodimer. Mg(2+) is required as a cofactor. The cofactor is Mn(2+). Requires Zn(2+) as cofactor.

The catalysed reaction is a 5'-end NAD(+)-phospho-ribonucleoside in mRNA + H2O = a 5'-end phospho-adenosine-phospho-ribonucleoside in mRNA + beta-nicotinamide D-ribonucleotide + 2 H(+). The enzyme catalyses NAD(+) + H2O = beta-nicotinamide D-ribonucleotide + AMP + 2 H(+). It carries out the reaction NADH + H2O = reduced beta-nicotinamide D-ribonucleotide + AMP + 2 H(+). Its function is as follows. mRNA decapping enzyme that specifically removes the nicotinamide adenine dinucleotide (NAD) cap from a subset of mRNAs by hydrolyzing the diphosphate linkage to produce nicotinamide mononucleotide (NMN) and 5' monophosphate mRNA. The NAD-cap is present at the 5'-end of some mRNAs and stabilizes RNA against 5'-processing. Has preference for mRNAs with a 5'-end purine. Catalyzes the hydrolysis of a broad range of dinucleotide pyrophosphates. This Yersinia pestis bv. Antiqua (strain Antiqua) protein is NAD-capped RNA hydrolase NudC.